We begin with the raw amino-acid sequence, 236 residues long: Mitochondrial inner membrane protease ATP23 (236 aa).

Histidine 136 lines the a divalent metal cation pocket. Glutamate 137 is an active-site residue. Histidine 140 contacts a divalent metal cation.

This sequence belongs to the peptidase M76 family.

The protein localises to the mitochondrion inner membrane. Has a dual role in the assembly of mitochondrial ATPase. Acts as a protease that removes N-terminal residues of mitochondrial ATPase CF(0) subunit 6 at the intermembrane space side. Also involved in the correct assembly of the membrane-embedded ATPase CF(0) particle, probably mediating association of subunit 6 with the subunit 9 ring. The chain is Mitochondrial inner membrane protease ATP23 (ATP23) from Debaryomyces hansenii (strain ATCC 36239 / CBS 767 / BCRC 21394 / JCM 1990 / NBRC 0083 / IGC 2968) (Yeast).